A 123-amino-acid polypeptide reads, in one-letter code: Ribosome-binding factor A (123 aa).

The protein belongs to the RbfA family. In terms of assembly, monomer. Binds 30S ribosomal subunits, but not 50S ribosomal subunits or 70S ribosomes.

The protein localises to the cytoplasm. Its function is as follows. One of several proteins that assist in the late maturation steps of the functional core of the 30S ribosomal subunit. Associates with free 30S ribosomal subunits (but not with 30S subunits that are part of 70S ribosomes or polysomes). Required for efficient processing of 16S rRNA. May interact with the 5'-terminal helix region of 16S rRNA. In Cupriavidus taiwanensis (strain DSM 17343 / BCRC 17206 / CCUG 44338 / CIP 107171 / LMG 19424 / R1) (Ralstonia taiwanensis (strain LMG 19424)), this protein is Ribosome-binding factor A.